Reading from the N-terminus, the 479-residue chain is Proline--tRNA ligase (479 aa).

It belongs to the class-II aminoacyl-tRNA synthetase family. ProS type 3 subfamily. As to quaternary structure, homodimer.

The protein localises to the cytoplasm. It catalyses the reaction tRNA(Pro) + L-proline + ATP = L-prolyl-tRNA(Pro) + AMP + diphosphate. Functionally, catalyzes the attachment of proline to tRNA(Pro) in a two-step reaction: proline is first activated by ATP to form Pro-AMP and then transferred to the acceptor end of tRNA(Pro). This is Proline--tRNA ligase from Agathobacter rectalis (strain ATCC 33656 / DSM 3377 / JCM 17463 / KCTC 5835 / VPI 0990) (Eubacterium rectale).